We begin with the raw amino-acid sequence, 25 residues long: Hemocyanin subunit 2 (25 aa).

Belongs to the tyrosinase family. Hemocyanin subfamily. As to expression, hemolymph.

The protein localises to the secreted. It localises to the extracellular space. Functionally, hemocyanins are copper-containing oxygen carriers occurring freely dissolved in the hemolymph of many mollusks and arthropods. The sequence is that of Hemocyanin subunit 2 from Carcinus maenas (Common shore crab).